Reading from the N-terminus, the 322-residue chain is Biotin synthase (322 aa).

In terms of domain architecture, Radical SAM core spans 39-266; the sequence is NQIQVSSLLN…KSVVRLSAGR (228 aa). Residues Cys54, Cys58, and Cys61 each contribute to the [4Fe-4S] cluster site. Residues Cys98, Cys129, Cys189, and Arg261 each contribute to the [2Fe-2S] cluster site.

It belongs to the radical SAM superfamily. Biotin synthase family. In terms of assembly, homodimer. It depends on [4Fe-4S] cluster as a cofactor. Requires [2Fe-2S] cluster as cofactor.

It carries out the reaction (4R,5S)-dethiobiotin + (sulfur carrier)-SH + 2 reduced [2Fe-2S]-[ferredoxin] + 2 S-adenosyl-L-methionine = (sulfur carrier)-H + biotin + 2 5'-deoxyadenosine + 2 L-methionine + 2 oxidized [2Fe-2S]-[ferredoxin]. Its pathway is cofactor biosynthesis; biotin biosynthesis; biotin from 7,8-diaminononanoate: step 2/2. In terms of biological role, catalyzes the conversion of dethiobiotin (DTB) to biotin by the insertion of a sulfur atom into dethiobiotin via a radical-based mechanism. The polypeptide is Biotin synthase (Ruthia magnifica subsp. Calyptogena magnifica).